The primary structure comprises 139 residues: Immunogenic miracidial antigen 8I' (139 aa).

Positions Ile-61–His-139 are disordered. Acidic residues predominate over residues Gly-64–Asp-85. The segment covering Ser-90–Gln-103 has biased composition (polar residues).

The protein belongs to the immunogenic miracidial antigen family.

The sequence is that of Immunogenic miracidial antigen 8I' (8I') from Schistosoma japonicum (Blood fluke).